The primary structure comprises 729 residues: Fatty acid oxidation complex subunit alpha (729 aa).

The tract at residues 1 to 189 is enoyl-CoA hydratase/isomerase; that stretch reads MLYKGDTLYL…KIGLVDGVVK (189 aa). Asp-296 contributes to the substrate binding site. The segment at 311–729 is 3-hydroxyacyl-CoA dehydrogenase; that stretch reads ETPKQAAVLG…ARPVGDLKTA (419 aa). NAD(+) is bound by residues Met-324, Asp-343, 400 to 402, Lys-407, and Ser-429; that span reads VVE. His-450 serves as the catalytic For 3-hydroxyacyl-CoA dehydrogenase activity. Asn-453 contacts NAD(+). Substrate-binding residues include Asn-500 and Tyr-660. Residues 708 to 729 are disordered; it reads RHNEPYYPPVEPARPVGDLKTA.

In the N-terminal section; belongs to the enoyl-CoA hydratase/isomerase family. The protein in the C-terminal section; belongs to the 3-hydroxyacyl-CoA dehydrogenase family. Heterotetramer of two alpha chains (FadB) and two beta chains (FadA).

It carries out the reaction a (3S)-3-hydroxyacyl-CoA + NAD(+) = a 3-oxoacyl-CoA + NADH + H(+). It catalyses the reaction a (3S)-3-hydroxyacyl-CoA = a (2E)-enoyl-CoA + H2O. The catalysed reaction is a 4-saturated-(3S)-3-hydroxyacyl-CoA = a (3E)-enoyl-CoA + H2O. The enzyme catalyses (3S)-3-hydroxybutanoyl-CoA = (3R)-3-hydroxybutanoyl-CoA. It carries out the reaction a (3Z)-enoyl-CoA = a 4-saturated (2E)-enoyl-CoA. It catalyses the reaction a (3E)-enoyl-CoA = a 4-saturated (2E)-enoyl-CoA. The protein operates within lipid metabolism; fatty acid beta-oxidation. Its function is as follows. Involved in the aerobic and anaerobic degradation of long-chain fatty acids via beta-oxidation cycle. Catalyzes the formation of 3-oxoacyl-CoA from enoyl-CoA via L-3-hydroxyacyl-CoA. It can also use D-3-hydroxyacyl-CoA and cis-3-enoyl-CoA as substrate. This is Fatty acid oxidation complex subunit alpha from Escherichia coli O81 (strain ED1a).